The chain runs to 683 residues: THO complex subunit 5 homolog (683 aa).

The segment at 1 to 42 (MSSESSKKRKPKVIRSDGTPTEGKRNRSDTEQEGKYYSEEAE) is disordered. N-acetylserine is present on serine 2. Residues 2-144 (SSESSKKRKP…YEVMHLQKEI (143 aa)) are interaction with CSF1R. The tract at residues 2 to 199 (SSESSKKRKP…RLDWELEQRK (198 aa)) is interaction with THOC7. Phosphoserine occurs at positions 5 and 6. The Nuclear localization signal motif lies at 7 to 10 (KKRK). Residues 22–42 (EGKRNRSDTEQEGKYYSEEAE) are compositionally biased toward basic and acidic residues. Positions 81–247 (AIEIEERRIQ…QASLPVQEYL (167 aa)) form a coiled coil. Lysine 153 is covalently cross-linked (Glycyl lysine isopeptide (Lys-Gly) (interchain with G-Cter in SUMO2)). Tyrosine 225 is subject to Phosphotyrosine. The segment at 247-683 (LFMPFDQAHK…NHPQGFFSHR (437 aa)) is tandem RWD domains. The tract at residues 301 to 336 (FKPPEDSQDDESDSDAEEEQTTKRRRPTLGVQLDDK) is disordered. The segment covering 306-319 (DSQDDESDSDAEEE) has biased composition (acidic residues). Serine 307, serine 312, and serine 314 each carry phosphoserine. Threonine 328 carries the phosphothreonine modification.

It belongs to the THOC5 family. As to quaternary structure, component of the THO subcomplex, which is composed of THOC1, THOC2, THOC3, THOC5, THOC6 and THOC7. The THO subcomplex interacts with DDX39B to form the THO-DDX39B complex which multimerizes into a 28-subunit tetrameric assembly. Component of the transcription/export (TREX) complex at least composed of ALYREF/THOC4, DDX39B, SARNP/CIP29, CHTOP and the THO subcomplex; in the complex interacts with THOC1, THOC2, THOC5, THOC6 and THOC7; forms a coiled-coil dimer with THOC7; together with THOC6 and THOC7, plays a key structural role in the oligomerization of the THO-DDX39B complex. TREX seems to have a dynamic structure involving ATP-dependent remodeling. Interacts (via N-terminus) with the NTF2 domain of NXF1. Interacts with phosphorylated CSF1R. Forms a complex with CEBPB. Interacts with CPSF6; indicative for an association with the cleavage factor Im (CFIm) complex. Interacts with THOC1. Interacts with LUZP4. Interacts with NCBP3. Phosphorylated on tyrosine upon binding to activated CSF1R; which causes a dissociation of the two proteins. Phosphorylation on Ser-5 and/or Ser-6 is required for nuclear export. Phosphorylated on Thr-328 in insulin-stimulated adipocytes. In terms of tissue distribution, ubiquitously expressed, with highest levels in testis, liver and heart.

The protein resides in the nucleus. Its subcellular location is the cytoplasm. Its function is as follows. Component of the THO subcomplex of the TREX complex which is thought to couple mRNA transcription, processing and nuclear export, and which specifically associates with spliced mRNA and not with unspliced pre-mRNA. Plays a key structural role in the oligomerization of the THO-DDX39B complex. TREX is recruited to spliced mRNAs by a transcription-independent mechanism, binds to mRNA upstream of the exon-junction complex (EJC) and is recruited in a splicing- and cap-dependent manner to a region near the 5' end of the mRNA where it functions in mRNA export to the cytoplasm via the TAP/NXF1 pathway. THOC5 in conjunction with ALYREF/THOC4 functions in NXF1-NXT1 mediated nuclear export of HSP70 mRNA; both proteins enhance the RNA binding activity of NXF1 and are required for NXF1 localization to the nuclear rim. Involved in transcription elongation and genome stability. Involved in alternative polyadenylation site choice by recruiting CPSF6 to 5' region of target genes; probably mediates association of the TREX and CFIm complexes. Functionally, regulates the expression of myeloid transcription factors CEBPA, CEBPB and GAB2 by enhancing the levels of phosphatidylinositol 3,4,5-trisphosphate. May be involved in the differentiation of granulocytes and adipocytes. Essential for hematopoietic primitive cell survival and plays an integral role in monocytic development. This chain is THO complex subunit 5 homolog (Thoc5), found in Mus musculus (Mouse).